Reading from the N-terminus, the 139-residue chain is Actin-depolymerizing factor (139 aa).

Positions 5–139 (SSGMAVDDEC…SMDIIKARAF (135 aa)) constitute an ADF-H domain.

This sequence belongs to the actin-binding proteins ADF family. Preferentially in mature anther.

Actin-depolymerizing protein. Severs actin filaments (F-actin) and binds to actin monomers. The chain is Actin-depolymerizing factor from Lilium longiflorum (Trumpet lily).